Here is a 657-residue protein sequence, read N- to C-terminus: N-acetylgalactosaminyltransferase 7 (657 aa).

The Cytoplasmic segment spans residues 1-6 (MRLKIG). The chain crosses the membrane as a helical; Signal-anchor for type II membrane protein span at residues 7 to 29 (FILRSLLVVGSFLGLVVLWSSLT). Topologically, residues 30 to 657 (PRPDDPSPLS…KWEMNNIHSV (628 aa)) are lumenal. Residues 31 to 65 (RPDDPSPLSRMREDRDVNDPMPNRGGNGLAPGEDR) form a disordered region. Disulfide bonds link C197–C435, C426–C507, C545–C562, C585–C600, and C625–C640. The catalytic subdomain A stretch occupies residues 206–317 (LLTSSVVIVF…VNWYAPLVAP (112 aa)). Substrate is bound by residues D247 and R277. 2 residues coordinate Mn(2+): D301 and H303. The catalytic subdomain B stretch occupies residues 381 to 443 (PYRSPAMAGG…PCSRVGHIYR (63 aa)). W412 contacts substrate. Mn(2+) is bound at residue H440. R443 is a binding site for substrate. Residues 532-652 (VDWGEIRGFE…SKTTQKWEMN (121 aa)) form the Ricin B-type lectin domain.

Belongs to the glycosyltransferase 2 family. GalNAc-T subfamily. It depends on Mn(2+) as a cofactor. As to expression, widely expressed. Expressed in uterus, retina, kidney, small intestine, omentum, stomach and CNS.

It is found in the golgi apparatus membrane. It carries out the reaction L-seryl-[protein] + UDP-N-acetyl-alpha-D-galactosamine = a 3-O-[N-acetyl-alpha-D-galactosaminyl]-L-seryl-[protein] + UDP + H(+). It catalyses the reaction L-threonyl-[protein] + UDP-N-acetyl-alpha-D-galactosamine = a 3-O-[N-acetyl-alpha-D-galactosaminyl]-L-threonyl-[protein] + UDP + H(+). It functions in the pathway protein modification; protein glycosylation. In terms of biological role, glycopeptide transferase involved in O-linked oligosaccharide biosynthesis, which catalyzes the transfer of an N-acetyl-D-galactosamine residue to an already glycosylated peptide. In contrast to other proteins of the family, it does not act as a peptide transferase that transfers GalNAc onto serine or threonine residue on the protein receptor, but instead requires the prior addition of a GalNAc on a peptide before adding additional GalNAc moieties. Some peptide transferase activity is however not excluded, considering that its appropriate peptide substrate may remain unidentified. The polypeptide is N-acetylgalactosaminyltransferase 7 (GALNT7) (Homo sapiens (Human)).